The following is a 1043-amino-acid chain: Non-canonical nonribosomal peptide synthetase cpsA (1043 aa).

Residues 41 to 386 form an adenylation (A) domain region; the sequence is RRAQENPSAP…IGGDGVSPGY (346 aa). Residues 549–626 form the Carrier domain; it reads QDASTTISRL…QMARYVDEGG (78 aa). S586 carries the post-translational modification O-(pantetheine 4'-phosphoryl)serine. Residues 671-914 are short-chain dehydrogenase/reductase (R) domain; it reads MTGATGFVGA…FVPVDYLVDA (244 aa). One can recognise a Thioester reductase (TE) domain in the interval 672–915; that stretch reads TGATGFVGAF…VPVDYLVDAI (244 aa).

Belongs to the NRP synthetase family. The cofactor is pantetheine 4'-phosphate.

It carries out the reaction L-valine + ATP + NADPH + H(+) = L-valinal + AMP + diphosphate + NADP(+). It catalyses the reaction L-tryptophan + ATP + NADPH + H(+) = L-tryptophanal + AMP + diphosphate + NADP(+). It functions in the pathway alkaloid biosynthesis. Functionally, non-canonical nonribosomal peptide synthetase; part of the gene cluster that mediates the biosynthesis of campesine G, a dimeric indole piperazine alkaloid that shows good insecticidal activity Galleria mellonella. CpsA catalyzes the first steps of the pathway by producing L-tryptophanal and L-valinal from their respective amino-acids. These products condensate spontaneously to form trypyl-valyl pyrazine also known as didehydrocampesine A. The NmrA-like family domain-containing oxidoreductase cpsB is the next enzyme in cps pathway and reduces the unstable didehydrocampesine A to campesine A. The methyltransferase cpsF and the acetyltransferase cpsE both recognize N13 of piperazine ring to carry out methylation and acetylation of campesine A to produce campesine C and B, respectively. The cytochrome P450 monooxygenase cpsD then acts as a dimerase that catalyzes oxidative heterocoupling between campesine B and C to produce heterodimers with unexpected 6/5/6/6/6/6/5/6 eight-ring scaffold called campesine D. Finally,the cytochrome P450 monooxygenase cpsC is a regioselective dehydrogenase that catalyzes dehydrogenation reaction towards C2-N1 to produce campesine G. The polypeptide is Non-canonical nonribosomal peptide synthetase cpsA (Aspergillus campestris (strain IBT 28561)).